Reading from the N-terminus, the 457-residue chain is Glycoprotein endo-alpha-1,2-mannosidase-like protein (457 aa).

The Cytoplasmic portion of the chain corresponds to 1 to 8; that stretch reads MARRRRRA. A helical; Signal-anchor for type II membrane protein transmembrane segment spans residues 9-29; sequence CIALFLVLLFAFGTLMGLRTL. Residues 30–457 are Lumenal-facing; it reads KAPDGLPALG…FIKEKEQWLM (428 aa). The interval 46–93 is disordered; it reads PFERRPEGAPAPAARAPAAPAAPPPPPPPPRTADPGGSPGPAPAEAEP. The segment covering 53 to 64 has biased composition (low complexity); it reads GAPAPAARAPAA. The segment covering 65 to 87 has biased composition (pro residues); the sequence is PAAPPPPPPPPRTADPGGSPGPA.

The protein belongs to the glycosyl hydrolase 99 family.

The protein localises to the golgi apparatus membrane. This is Glycoprotein endo-alpha-1,2-mannosidase-like protein (MANEAL) from Homo sapiens (Human).